A 115-amino-acid chain; its full sequence is NADH-ubiquinone oxidoreductase chain 3 (115 aa).

3 consecutive transmembrane segments (helical) span residues 4–24 (MLIL…AFWL), 55–75 (FFLV…LLPL), and 86–106 (MLMT…AYEW).

It belongs to the complex I subunit 3 family. In terms of assembly, core subunit of respiratory chain NADH dehydrogenase (Complex I) which is composed of 45 different subunits. Interacts with TMEM186. Interacts with TMEM242.

The protein resides in the mitochondrion inner membrane. The catalysed reaction is a ubiquinone + NADH + 5 H(+)(in) = a ubiquinol + NAD(+) + 4 H(+)(out). Core subunit of the mitochondrial membrane respiratory chain NADH dehydrogenase (Complex I) which catalyzes electron transfer from NADH through the respiratory chain, using ubiquinone as an electron acceptor. Essential for the catalytic activity of complex I. This chain is NADH-ubiquinone oxidoreductase chain 3, found in Microtus pennsylvanicus (Meadow vole).